The primary structure comprises 113 residues: Large ribosomal subunit protein uL24 (113 aa).

The protein belongs to the universal ribosomal protein uL24 family. In terms of assembly, part of the 50S ribosomal subunit.

Its function is as follows. One of two assembly initiator proteins, it binds directly to the 5'-end of the 23S rRNA, where it nucleates assembly of the 50S subunit. One of the proteins that surrounds the polypeptide exit tunnel on the outside of the subunit. This Micrococcus luteus (Micrococcus lysodeikticus) protein is Large ribosomal subunit protein uL24.